The sequence spans 428 residues: GTPase Obg (428 aa).

Residues Met1–Leu158 form the Obg domain. Residues Ala159–Glu329 form the OBG-type G domain. Residues Gly165–Ser172, Phe190–Val194, Asp212–Gly215, Asn282–Asp285, and Ser310–Val312 each bind GTP. Mg(2+) contacts are provided by Ser172 and Thr192. One can recognise an OCT domain in the interval Lys350 to Asp428.

The protein belongs to the TRAFAC class OBG-HflX-like GTPase superfamily. OBG GTPase family. As to quaternary structure, monomer. Mg(2+) is required as a cofactor.

Its subcellular location is the cytoplasm. Its function is as follows. An essential GTPase which binds GTP, GDP and possibly (p)ppGpp with moderate affinity, with high nucleotide exchange rates and a fairly low GTP hydrolysis rate. Plays a role in control of the cell cycle, stress response, ribosome biogenesis and in those bacteria that undergo differentiation, in morphogenesis control. The polypeptide is GTPase Obg (Bacillus cereus (strain ATCC 14579 / DSM 31 / CCUG 7414 / JCM 2152 / NBRC 15305 / NCIMB 9373 / NCTC 2599 / NRRL B-3711)).